A 91-amino-acid polypeptide reads, in one-letter code: Small ribosomal subunit protein uS19 (91 aa).

It belongs to the universal ribosomal protein uS19 family.

Functionally, protein S19 forms a complex with S13 that binds strongly to the 16S ribosomal RNA. The polypeptide is Small ribosomal subunit protein uS19 (Afipia carboxidovorans (strain ATCC 49405 / DSM 1227 / KCTC 32145 / OM5) (Oligotropha carboxidovorans)).